A 334-amino-acid polypeptide reads, in one-letter code: Protein-methionine-sulfoxide reductase catalytic subunit MsrP (334 aa).

Residues Met-1–Ala-44 constitute a signal peptide (tat-type signal). Residues Asn-88, Tyr-91–Glu-92, Cys-146, Thr-181, Asn-233, Arg-238, and Gly-249–Lys-251 contribute to the Mo-molybdopterin site.

It belongs to the MsrP family. Heterodimer of a catalytic subunit (MsrP) and a heme-binding subunit (MsrQ). Mo-molybdopterin is required as a cofactor. Post-translationally, predicted to be exported by the Tat system. The position of the signal peptide cleavage has not been experimentally proven.

Its subcellular location is the periplasm. The catalysed reaction is L-methionyl-[protein] + a quinone + H2O = L-methionyl-(S)-S-oxide-[protein] + a quinol. The enzyme catalyses L-methionyl-[protein] + a quinone + H2O = L-methionyl-(R)-S-oxide-[protein] + a quinol. Its function is as follows. Part of the MsrPQ system that repairs oxidized periplasmic proteins containing methionine sulfoxide residues (Met-O), using respiratory chain electrons. Thus protects these proteins from oxidative-stress damage caused by reactive species of oxygen and chlorine generated by the host defense mechanisms. MsrPQ is essential for the maintenance of envelope integrity under bleach stress, rescuing a wide series of structurally unrelated periplasmic proteins from methionine oxidation, including the primary periplasmic chaperone SurA and the lipoprotein Pal. The catalytic subunit MsrP is non-stereospecific, being able to reduce both (R-) and (S-) diastereoisomers of methionine sulfoxide. This is Protein-methionine-sulfoxide reductase catalytic subunit MsrP from Escherichia coli O139:H28 (strain E24377A / ETEC).